A 222-amino-acid polypeptide reads, in one-letter code: 3-dehydroquinate dehydratase (222 aa).

3-dehydroquinate-binding positions include 32-34 (ELR) and R64. Residue H117 is the Proton donor/acceptor of the active site. K143 (schiff-base intermediate with substrate) is an active-site residue. Position 181 (R181) interacts with 3-dehydroquinate.

Belongs to the type-I 3-dehydroquinase family. As to quaternary structure, homodimer.

The catalysed reaction is 3-dehydroquinate = 3-dehydroshikimate + H2O. The protein operates within metabolic intermediate biosynthesis; chorismate biosynthesis; chorismate from D-erythrose 4-phosphate and phosphoenolpyruvate: step 3/7. In terms of biological role, involved in the third step of the chorismate pathway, which leads to the biosynthesis of aromatic amino acids. Catalyzes the cis-dehydration of 3-dehydroquinate (DHQ) and introduces the first double bond of the aromatic ring to yield 3-dehydroshikimate. The protein is 3-dehydroquinate dehydratase of Aeropyrum pernix (strain ATCC 700893 / DSM 11879 / JCM 9820 / NBRC 100138 / K1).